The chain runs to 591 residues: L-fucose isomerase (591 aa).

Residues Glu-337 and Asp-361 each act as proton acceptor in the active site. Residues Glu-337, Asp-361, and His-528 each coordinate Mn(2+).

It belongs to the L-fucose isomerase family. Homohexamer. It depends on Mn(2+) as a cofactor.

The protein localises to the cytoplasm. The catalysed reaction is L-fucose = L-fuculose. It participates in carbohydrate degradation; L-fucose degradation; L-lactaldehyde and glycerone phosphate from L-fucose: step 1/3. Functionally, converts the aldose L-fucose into the corresponding ketose L-fuculose. In Klebsiella pneumoniae (strain 342), this protein is L-fucose isomerase.